Consider the following 414-residue polypeptide: Deoxyuridine 5'-triphosphate nucleotidohydrolase (414 aa).

Substrate-binding positions include 327 to 329 and 409 to 410; these read RSS and FG.

This sequence belongs to the dUTPase family. Requires Mg(2+) as cofactor.

It catalyses the reaction dUTP + H2O = dUMP + diphosphate + H(+). Functionally, involved in nucleotide metabolism: produces dUMP, the immediate precursor of thymidine nucleotides and decreases the intracellular concentration of dUTP to avoid uracil incorporation into viral DNA. This Amazona oratrix (yellow-headed parrot) protein is Deoxyuridine 5'-triphosphate nucleotidohydrolase.